We begin with the raw amino-acid sequence, 384 residues long: 5-amino-6-(D-ribitylamino)uracil--L-tyrosine 4-hydroxyphenyl transferase 2 (384 aa).

Residues 53-286 form the Radical SAM core domain; that stretch reads VSYVVNRNIY…IAISRVILHT (234 aa). Cysteine 67, cysteine 71, and cysteine 74 together coordinate [4Fe-4S] cluster.

This sequence belongs to the radical SAM superfamily. CofH family. Consists of two subunits, CofG and CofH. [4Fe-4S] cluster is required as a cofactor.

It catalyses the reaction 5-amino-6-(D-ribitylamino)uracil + L-tyrosine + S-adenosyl-L-methionine = 5-amino-5-(4-hydroxybenzyl)-6-(D-ribitylimino)-5,6-dihydrouracil + 2-iminoacetate + 5'-deoxyadenosine + L-methionine + H(+). It participates in cofactor biosynthesis; coenzyme F0 biosynthesis. Its function is as follows. Catalyzes the radical-mediated synthesis of 5-amino-5-(4-hydroxybenzyl)-6-(D-ribitylimino)-5,6-dihydrouracil from 5-amino-6-(D-ribitylamino)uracil and L-tyrosine. This is 5-amino-6-(D-ribitylamino)uracil--L-tyrosine 4-hydroxyphenyl transferase 2 from Methanosarcina mazei (strain ATCC BAA-159 / DSM 3647 / Goe1 / Go1 / JCM 11833 / OCM 88) (Methanosarcina frisia).